The primary structure comprises 674 residues: Translation factor GUF1, mitochondrial (674 aa).

Residues 1-33 (MLRPWFCFRSCVSLLSNRRQYGFRYLATAEPSK) constitute a mitochondrion transit peptide. The interval 32–51 (SKSEKPAKPVKPAKPMSVQE) is disordered. The tr-type G domain occupies 75-257 (QNYRNFSIVA…SIIKNIPAPV (183 aa)). GTP-binding positions include 84–91 (AHVDHGKS), 150–154 (DTPGH), and 204–207 (NKID).

Belongs to the TRAFAC class translation factor GTPase superfamily. Classic translation factor GTPase family. LepA subfamily.

It localises to the mitochondrion inner membrane. It carries out the reaction GTP + H2O = GDP + phosphate + H(+). Its function is as follows. Promotes mitochondrial protein synthesis. May act as a fidelity factor of the translation reaction, by catalyzing a one-codon backward translocation of tRNAs on improperly translocated ribosomes. Binds to mitochondrial ribosomes in a GTP-dependent manner. This Lodderomyces elongisporus (strain ATCC 11503 / CBS 2605 / JCM 1781 / NBRC 1676 / NRRL YB-4239) (Yeast) protein is Translation factor GUF1, mitochondrial.